Consider the following 410-residue polypeptide: Mating-type locus allele B4 protein (410 aa).

A variable domain between B alleles region spans residues M1–C110. Positions V107–H184 form a DNA-binding region, homeobox; TALE-type. Residues R111–V410 are highly conserved between B alleles. Disordered regions lie at residues R202–D241, T278–L335, and R375–E394. Low complexity predominate over residues S206 to S222. The short motif at K276 to R308 is the Nuclear localization signal element. Positions Q294 to S307 are enriched in basic residues. Residues P312–L335 show a composition bias toward polar residues. The interval P333 to V410 is not essential for B4 function. The segment covering R375 to G388 has biased composition (basic residues).

Belongs to the TALE/M-ATYP homeobox family.

Its subcellular location is the nucleus. Its function is as follows. The B locus has at least 25 alleles, and any combination of two different B alleles yields a multimeric regulatory protein, that activates genes responsible for the pathogenicity and for the sexual development of the fungus within the corn plant. The chain is Mating-type locus allele B4 protein from Mycosarcoma maydis (Corn smut fungus).